A 225-amino-acid chain; its full sequence is Ribosomal RNA small subunit methyltransferase G (225 aa).

S-adenosyl-L-methionine is bound by residues G89, L94, 140–141 (IE), and R157.

The protein belongs to the methyltransferase superfamily. RNA methyltransferase RsmG family.

It is found in the cytoplasm. The catalysed reaction is guanosine(527) in 16S rRNA + S-adenosyl-L-methionine = N(7)-methylguanosine(527) in 16S rRNA + S-adenosyl-L-homocysteine. In terms of biological role, specifically methylates the N7 position of guanine in position 527 of 16S rRNA. The sequence is that of Ribosomal RNA small subunit methyltransferase G from Psychrobacter sp. (strain PRwf-1).